The chain runs to 754 residues: Deadenylation-dependent mRNA-decapping factor pdc2 (754 aa).

The segment at 499–754 (LESIWKALYI…MGLDARQLSA (256 aa)) is interaction with lsm1.

This sequence belongs to the PAT1 family. Interacts with dcp2. Interacts with lsm1; via C-terminus.

The protein localises to the cytoplasm. It localises to the nucleus. The protein resides in the P-body. Its function is as follows. Activator of decapping that functions as a general and active mechanism of translational repression and required for P-body formation. Stabilizes the 3' terminus of mRNAs and modulates the rates of mRNA-decapping that occur following deadenylation. Might be required for promoting the formation or the stabilization of the preinitiation translation complexes. Necessary for accurate chromosome transmission during cell division. Together with lsm1, recruits the deadenylase ccr4 to P-bodies. In Schizosaccharomyces pombe (strain 972 / ATCC 24843) (Fission yeast), this protein is Deadenylation-dependent mRNA-decapping factor pdc2.